Consider the following 147-residue polypeptide: Hemoglobin subunit beta (147 aa).

Position 2 is an N-acetylvaline (Val2). In terms of domain architecture, Globin spans 3–147 (HLSAEEKEAV…VANALAHKYH (145 aa)). A Phosphoserine modification is found at Ser45. Residue Lys60 is modified to N6-acetyllysine. His64 contacts heme b. Lys83 carries the N6-acetyllysine modification. Position 93 (His93) interacts with heme b. Cys94 is subject to S-nitrosocysteine. Lys145 carries the N6-acetyllysine modification.

Belongs to the globin family. Heterotetramer of two alpha chains and two beta chains. In terms of tissue distribution, red blood cells.

Its function is as follows. Involved in oxygen transport from the lung to the various peripheral tissues. This is Hemoglobin subunit beta (HBB) from Sus scrofa (Pig).